Consider the following 96-residue polypeptide: Large ribosomal subunit protein uL23 (96 aa).

The protein belongs to the universal ribosomal protein uL23 family. Part of the 50S ribosomal subunit. Contacts protein L29, and trigger factor when it is bound to the ribosome.

One of the early assembly proteins it binds 23S rRNA. One of the proteins that surrounds the polypeptide exit tunnel on the outside of the ribosome. Forms the main docking site for trigger factor binding to the ribosome. This chain is Large ribosomal subunit protein uL23, found in Endomicrobium trichonymphae.